Here is a 419-residue protein sequence, read N- to C-terminus: MFSFGRARSQGRQNRSMSLGGLDYADPKKKNNYLGKILLTASLTALCIFMLKQSPTFNTPSVFSRHEPGVTHVLVTGGAGYIGSHAALRLLKESYRVTIVDNLSRGNLAAVRILQELFPEPGRLQFIYADLGDAKAVNKIFTENAFDAVMHFAAVAYVGESTQFPLKYYHNITSNTLVVLETMAAHGVKTLIYSSTCATYGEPDIMPITEETPQVPINPYGKAKKMAEDIILDFSKNSDMAVMILRYFNVIGSDPEGRLGEAPRPELREHGRISGACFDAARGIMPGLQIKGTDYKTADGTCVRDYIDVTDLVDAHVKALQKAKPRKVGIYNVGTGKGSSVKEFVEACKKATGVEIKIDYLPRRAGDYAEVYSDPSKIRKELNWTAKHTNLKESLETAWRWQKLHRNGYGLTTSSVSVY.

Positions 1–21 are disordered; the sequence is MFSFGRARSQGRQNRSMSLGG. The Cytoplasmic portion of the chain corresponds to 1–32; sequence MFSFGRARSQGRQNRSMSLGGLDYADPKKKNN. A helical; Signal-anchor for type II membrane protein transmembrane segment spans residues 33–51; the sequence is YLGKILLTASLTALCIFML. Residues 52–419 lie on the Lumenal side of the membrane; sequence KQSPTFNTPS…GLTTSSVSVY (368 aa). 72 to 103 contacts NAD(+); the sequence is HVLVTGGAGYIGSHAALRLLKESYRVTIVDNL. Tyr-220 acts as the Proton acceptor in catalysis.

It belongs to the NAD(P)-dependent epimerase/dehydratase family. It depends on NAD(+) as a cofactor. In terms of tissue distribution, high expression in roots. Also found in leaves, stems, flowers, and siliques.

It is found in the golgi apparatus. It localises to the golgi stack membrane. It catalyses the reaction UDP-beta-L-arabinopyranose = UDP-alpha-D-xylose. It participates in nucleotide-sugar biosynthesis; UDP-L-arabinose biosynthesis; UDP-L-arabinose from UDP-alpha-D-xylose: step 1/1. It functions in the pathway cell wall biogenesis; cell wall polysaccharide biosynthesis. Its function is as follows. Acts as a UDP-D-xylose 4-epimerase but lacks both UDP-D-glucose and UDP-D-glucuronic acid 4-epimerase activities in vitro. In Arabidopsis thaliana (Mouse-ear cress), this protein is UDP-arabinose 4-epimerase 1.